A 555-amino-acid polypeptide reads, in one-letter code: 2-isopropylmalate synthase (555 aa).

One can recognise a Pyruvate carboxyltransferase domain in the interval 30 to 303; sequence PIWCSVDLRD…DPGLDCTDIN (274 aa). Residues Asp39, His242, His244, and Asn278 each coordinate Mg(2+). Residues 437 to 555 form a regulatory domain region; sequence QPDARIKFVD…VSAANRVIAK (119 aa).

It belongs to the alpha-IPM synthase/homocitrate synthase family. LeuA type 2 subfamily. As to quaternary structure, homodimer. Mg(2+) is required as a cofactor.

The protein localises to the cytoplasm. It catalyses the reaction 3-methyl-2-oxobutanoate + acetyl-CoA + H2O = (2S)-2-isopropylmalate + CoA + H(+). Its pathway is amino-acid biosynthesis; L-leucine biosynthesis; L-leucine from 3-methyl-2-oxobutanoate: step 1/4. Its function is as follows. Catalyzes the condensation of the acetyl group of acetyl-CoA with 3-methyl-2-oxobutanoate (2-ketoisovalerate) to form 3-carboxy-3-hydroxy-4-methylpentanoate (2-isopropylmalate). This Brucella suis biovar 1 (strain 1330) protein is 2-isopropylmalate synthase.